Reading from the N-terminus, the 103-residue chain is Small ribosomal subunit protein uS10 (103 aa).

This sequence belongs to the universal ribosomal protein uS10 family. In terms of assembly, part of the 30S ribosomal subunit.

Involved in the binding of tRNA to the ribosomes. In Verminephrobacter eiseniae (strain EF01-2), this protein is Small ribosomal subunit protein uS10.